Reading from the N-terminus, the 104-residue chain is UPF0235 protein MTH_637 (104 aa).

Belongs to the UPF0235 family.

The protein is UPF0235 protein MTH_637 of Methanothermobacter thermautotrophicus (strain ATCC 29096 / DSM 1053 / JCM 10044 / NBRC 100330 / Delta H) (Methanobacterium thermoautotrophicum).